Here is a 76-residue protein sequence, read N- to C-terminus: Conotoxin Cl6.4 (76 aa).

The N-terminal stretch at 1 to 19 (MTLTFLLVVALCMLTTCHT) is a signal peptide. A propeptide spanning residues 20-47 (ENYRDSQKVSPVRSIGKTQFARSLRLSE) is cleaved from the precursor. Cystine bridges form between Cys-50–Cys-66, Cys-57–Cys-70, and Cys-65–Cys-75.

As to expression, expressed by the venom duct.

The protein resides in the secreted. The sequence is that of Conotoxin Cl6.4 from Californiconus californicus (California cone).